A 426-amino-acid polypeptide reads, in one-letter code: 5-aminovalerate aminotransferase DavT (426 aa).

Pyridoxal 5'-phosphate is bound by residues 112–113, Y139, and 240–243; these read GS and DEVQ. The residue at position 269 (K269) is an N6-(pyridoxal phosphate)lysine. T298 is a pyridoxal 5'-phosphate binding site.

The protein belongs to the class-III pyridoxal-phosphate-dependent aminotransferase family. The cofactor is pyridoxal 5'-phosphate.

It catalyses the reaction 5-aminopentanoate + 2-oxoglutarate = 5-oxopentanoate + L-glutamate. Its function is as follows. Catalyzes the conversion of 5-aminovalerate to 5-oxopentanoate. This chain is 5-aminovalerate aminotransferase DavT (davT), found in Pseudomonas aeruginosa (strain ATCC 15692 / DSM 22644 / CIP 104116 / JCM 14847 / LMG 12228 / 1C / PRS 101 / PAO1).